The following is an 86-amino-acid chain: MEFKIMSTTDKIEQKVIEMVAEKLNKDKAIITTDSRFIEDLKADSLDTVELMMAIEVEYGIDIPDDEATKIKTVSDVIKYIKERQS.

Residues 10 to 85 (DKIEQKVIEM…DVIKYIKERQ (76 aa)) enclose the Carrier domain. Position 45 is an O-(pantetheine 4'-phosphoryl)serine (Ser45).

The protein belongs to the acyl carrier protein (ACP) family. Post-translationally, 4'-phosphopantetheine is transferred from CoA to a specific serine of apo-ACP by AcpS. This modification is essential for activity because fatty acids are bound in thioester linkage to the sulfhydryl of the prosthetic group.

It localises to the cytoplasm. The protein operates within lipid metabolism; fatty acid biosynthesis. Functionally, carrier of the growing fatty acid chain in fatty acid biosynthesis. This is Acyl carrier protein from Rickettsia prowazekii (strain Madrid E).